We begin with the raw amino-acid sequence, 358 residues long: DNA integrity scanning protein DisA (358 aa).

Positions 6–144 constitute a DAC domain; it reads RPTLREAVAR…RGERHVLTDS (139 aa). Residues Gly-73, Leu-91, and 104–108 contribute to the ATP site; that span reads TRHRS.

This sequence belongs to the DisA family. As to quaternary structure, homooctamer. It depends on Mg(2+) as a cofactor.

It carries out the reaction 2 ATP = 3',3'-c-di-AMP + 2 diphosphate. Functionally, participates in a DNA-damage check-point. DisA forms globular foci that rapidly scan along the chromosomes searching for lesions. In terms of biological role, also has diadenylate cyclase activity, catalyzing the condensation of 2 ATP molecules into cyclic di-AMP (c-di-AMP). c-di-AMP likely acts as a signaling molecule that may couple DNA integrity with a cellular process. The polypeptide is DNA integrity scanning protein DisA (Mycobacterium tuberculosis (strain ATCC 25177 / H37Ra)).